The chain runs to 265 residues: tRNA (guanine-N(7)-)-methyltransferase (265 aa).

Residues 1–16 are compositionally biased toward basic and acidic residues; it reads MNHDDPNASGVPHDDA. Residues 1-40 form a disordered region; sequence MNHDDPNASGVPHDDANDAAPASASDAARATGHADDESSP. Positions 18 to 31 are enriched in low complexity; sequence DAAPASASDAARAT. Glu-95, Glu-120, Asp-147, and Asp-170 together coordinate S-adenosyl-L-methionine. Asp-170 is a catalytic residue. Substrate is bound by residues Lys-174, Asp-206, and 241–244; that span reads TKFE.

The protein belongs to the class I-like SAM-binding methyltransferase superfamily. TrmB family.

It catalyses the reaction guanosine(46) in tRNA + S-adenosyl-L-methionine = N(7)-methylguanosine(46) in tRNA + S-adenosyl-L-homocysteine. Its pathway is tRNA modification; N(7)-methylguanine-tRNA biosynthesis. In terms of biological role, catalyzes the formation of N(7)-methylguanine at position 46 (m7G46) in tRNA. This Burkholderia thailandensis (strain ATCC 700388 / DSM 13276 / CCUG 48851 / CIP 106301 / E264) protein is tRNA (guanine-N(7)-)-methyltransferase.